The primary structure comprises 754 residues: Zinc finger protein with KRAB and SCAN domains 7 (754 aa).

A Glycyl lysine isopeptide (Lys-Gly) (interchain with G-Cter in SUMO2) cross-link involves residue Lys28. An SCAN box domain is found at 54–136 (RLHFRQLCYH…AVVEDFQRHL (83 aa)). The interval 157–215 (TALGTTKESPPTSPLSGGSAPGAHLEPPYDPGTHHLPSGDFAQCTSPVPTLPQVGNSGD) is disordered. 2 stretches are compositionally biased toward polar residues: residues 158 to 172 (ALGT…SPLS) and 199 to 215 (QCTS…NSGD). Residues 231–306 (VAYEDLSVDY…TSGGLFGVVP (76 aa)) enclose the KRAB domain. 10 C2H2-type zinc fingers span residues 383-405 (YRCD…QRIH), 411-433 (YECN…LRTH), 439-461 (YECS…QRLH), 467-489 (YKCN…QRTH), 495-517 (YECN…QVLH), 523-545 (YKCN…QRIH), 551-573 (YECS…QSLH), 579-601 (YKCS…ERIH), 607-629 (FECS…QRLH), and 635-657 (YKCN…QRIH). A C2H2-type 11; degenerate zinc finger spans residues 663-685 (YECNECGKVFSYSSSLMVHQRTH). 2 C2H2-type zinc fingers span residues 691–713 (YKCN…QRVH) and 719–741 (YECS…QRTH). Positions 735–754 (NHHQRTHTGEKSSGLAWSVS) are disordered.

This sequence belongs to the krueppel C2H2-type zinc-finger protein family.

The protein localises to the nucleus. Functionally, may be involved in transcriptional regulation. The protein is Zinc finger protein with KRAB and SCAN domains 7 (ZKSCAN7) of Homo sapiens (Human).